The sequence spans 515 residues: Fatty acyl-CoA reductase 1 (515 aa).

Residues 1–465 lie on the Cytoplasmic side of the membrane; that stretch reads MVSIPEYYEG…ARKHLNKLRN (465 aa). The tract at residues 451–507 is necessary and sufficient for PEX19-mediated localization into peroxisome membrane; the sequence is SGLPAARKHLNKLRNIRYGFNTILVILIWRIFIARSQMARNIWYFVVSLCYKFLSYF. A helical membrane pass occupies residues 466–483; it reads IRYGFNTILVILIWRIFI. Residues 484–515 are Peroxisomal-facing; that stretch reads ARSQMARNIWYFVVSLCYKFLSYFRASSTMRY.

This sequence belongs to the fatty acyl-CoA reductase family. In terms of assembly, interacts with PEX19; PEX19 mediates the targeting of FAR1 to peroxisomes.

Its subcellular location is the peroxisome membrane. It carries out the reaction a long-chain fatty acyl-CoA + 2 NADPH + 2 H(+) = a long-chain primary fatty alcohol + 2 NADP(+) + CoA. It catalyses the reaction hexadecanoyl-CoA + 2 NADPH + 2 H(+) = hexadecan-1-ol + 2 NADP(+) + CoA. The catalysed reaction is octadecanoyl-CoA + 2 NADPH + 2 H(+) = octadecan-1-ol + 2 NADP(+) + CoA. The enzyme catalyses (9Z)-octadecenoyl-CoA + 2 NADPH + 2 H(+) = (9Z)-octadecen-1-ol + 2 NADP(+) + CoA. It carries out the reaction (9Z,12Z)-octadecadienoyl-CoA + 2 NADPH + 2 H(+) = (9Z,12Z)-octadecadien-1-ol + 2 NADP(+) + CoA. It catalyses the reaction eicosanoyl-CoA + 2 NADPH + 2 H(+) = eicosan-1-ol + 2 NADP(+) + CoA. The catalysed reaction is 16-methylheptadecanoyl-CoA + 2 NADPH + 2 H(+) = 16-methylheptadecan-1-ol + 2 NADP(+) + CoA. The enzyme catalyses 18-methylnonadecanoyl-CoA + 2 NADPH + 2 H(+) = 18-methylnonadecan-1-ol + 2 NADP(+) + CoA. Catalyzes the reduction of saturated and unsaturated C16 or C18 fatty acyl-CoA to fatty alcohols. It plays an essential role in the production of ether lipids/plasmalogens which synthesis requires fatty alcohols. In parallel, it is also required for wax monoesters production since fatty alcohols also constitute a substrate for their synthesis. This chain is Fatty acyl-CoA reductase 1, found in Pongo abelii (Sumatran orangutan).